A 498-amino-acid polypeptide reads, in one-letter code: MAPRKDFEDKATVPIQPVPGKRGYEFGGPLGAFVFIFGLSTLIYCLTFLCNDVSGCPVPSLLNPSTLSLDKLKEEAGWPQEGLKAFFDVRVTVWVLSYYVLSLVLYVFLPGEVVEGTELACKGRLRYKFNALPSAILILGGLALGTYMHGADFVVWTFLWDNYVQIITANLIICVVLAIFVYARSFSIPAPGQPNPELRELAPGGHSGNALYDFFIGRELNPRVQLPIPFVDEASRTIDINVWCEMRPGLLGWIILNLSNIARQYRTYGYITNSIVLSTVFQTFYVLDALYMEPAVLTTMDVIMDGFGYMLSFGHLVWVPFIYNIQTRYLAVFPLELRLREILLILAVTGAGYAIFRGANNQKNRFRRDPSDPRMMHIKYIQTSSGSKLMISGWWGLARHINYLGDWLMSWSYSLPTGIAGYTIIESINSSGDMQKQAIQTPEVRGWGMIFTYFFLVYFGALLIHREGRDEEKCKSKYGTDWERYTSIVRSRIIPGIY.

Helical transmembrane passes span 30-50, 91-111, 136-156, and 163-183; these read LGAF…TFLC, VTVW…FLPG, ILIL…FVVW, and YVQI…FVYA. N-linked (GlcNAc...) asparagine glycosylation occurs at asparagine 257. Transmembrane regions (helical) follow at residues 275–295, 302–322, and 339–359; these read IVLS…MEPA, VIMD…VPFI, and LREI…FRGA. NADP(+) contacts are provided by residues lysine 363, arginine 367, tryptophan 395, and 402–403; that span reads NY. N-linked (GlcNAc...) asparagine glycosylation is present at asparagine 429. The chain crosses the membrane as a helical span at residues 444–464; the sequence is VRGWGMIFTYFFLVYFGALLI. NADP(+) is bound by residues aspartate 470, 474–478, and tyrosine 485; that span reads CKSKY.

The protein belongs to the ERG4/ERG24 family.

It localises to the endoplasmic reticulum membrane. Its pathway is steroid metabolism; ergosterol biosynthesis. Its function is as follows. Delta(14)-sterol reductase; part of the third module of ergosterol biosynthesis pathway that includes the late steps of the pathway. Catalyzes the reduction of the C14=C15 double bond within 4,4,24-trimethyl ergosta-8,14,24(28)-trienolto produce 4,4-dimethylfecosterol. The third module or late pathway involves the ergosterol synthesis itself through consecutive reactions that mainly occur in the endoplasmic reticulum (ER) membrane. Firstly, the squalene synthase erg9 catalyzes the condensation of 2 farnesyl pyrophosphate moieties to form squalene, which is the precursor of all steroids. Squalene synthase is crucial for balancing the incorporation of farnesyl diphosphate (FPP) into sterol and nonsterol isoprene synthesis. Secondly, squalene is converted into lanosterol by the consecutive action of the squalene epoxidase erg1 and the lanosterol synthase erg7. Then, the delta(24)-sterol C-methyltransferase erg6 methylates lanosterol at C-24 to produce eburicol. Eburicol is the substrate of the sterol 14-alpha demethylase encoded by cyp51A and cyp51B, to yield 4,4,24-trimethyl ergosta-8,14,24(28)-trienol. The C-14 reductase erg24 then reduces the C14=C15 double bond which leads to 4,4-dimethylfecosterol. A sequence of further demethylations at C-4, involving the C-4 demethylation complex containing the C-4 methylsterol oxidases erg25A or erg25B, the sterol-4-alpha-carboxylate 3-dehydrogenase erg26 and the 3-keto-steroid reductase erg27, leads to the production of fecosterol via 4-methylfecosterol. The C-8 sterol isomerase erg2 then catalyzes the reaction which results in unsaturation at C-7 in the B ring of sterols and thus converts fecosterol to episterol. The sterol-C5-desaturase erg3B then catalyzes the introduction of a C-5 double bond in the B ring to produce 5-dehydroepisterol. The 2 other sterol-C5-desaturases, erg3A and erg3C, seem to be less important in ergosterol biosynthesis. The C-22 sterol desaturase erg5 further converts 5-dehydroepisterol into ergosta-5,7,22,24(28)-tetraen-3beta-ol by forming the C-22(23) double bond in the sterol side chain. Finally, ergosta-5,7,22,24(28)-tetraen-3beta-ol is substrate of the C-24(28) sterol reductases erg4A and erg4B to produce ergosterol. Possible alternative sterol biosynthetic pathways might exist from fecosterol to ergosterol, depending on the activities of the erg3 isoforms. The polypeptide is Delta(14)-sterol reductase erg24A (Aspergillus fumigatus (strain ATCC MYA-4609 / CBS 101355 / FGSC A1100 / Af293) (Neosartorya fumigata)).